The chain runs to 230 residues: Fibrillarin-like rRNA/tRNA 2'-O-methyltransferase (230 aa).

S-adenosyl-L-methionine-binding positions include 87-88 (TT), 105-106 (EF), 130-131 (DA), and 150-153 (DVAQ).

It belongs to the methyltransferase superfamily. Fibrillarin family. As to quaternary structure, interacts with nop5. Component of box C/D small ribonucleoprotein (sRNP) particles that contain rpl7ae, FlpA and nop5, plus a guide RNA.

Its function is as follows. Involved in pre-rRNA and tRNA processing. Utilizes the methyl donor S-adenosyl-L-methionine to catalyze the site-specific 2'-hydroxyl methylation of ribose moieties in rRNA and tRNA. Site specificity is provided by a guide RNA that base pairs with the substrate. Methylation occurs at a characteristic distance from the sequence involved in base pairing with the guide RNA. The chain is Fibrillarin-like rRNA/tRNA 2'-O-methyltransferase from Methanococcus maripaludis (strain C5 / ATCC BAA-1333).